The primary structure comprises 318 residues: Replication factor C small subunit (318 aa).

Gly-43–Thr-50 serves as a coordination point for ATP.

This sequence belongs to the activator 1 small subunits family. RfcS subfamily. As to quaternary structure, heteromultimer composed of small subunits (RfcS) and large subunits (RfcL).

Its function is as follows. Part of the RFC clamp loader complex which loads the PCNA sliding clamp onto DNA. In Picrophilus torridus (strain ATCC 700027 / DSM 9790 / JCM 10055 / NBRC 100828 / KAW 2/3), this protein is Replication factor C small subunit.